The following is a 106-amino-acid chain: Large ribosomal subunit protein uL24 (106 aa).

The protein belongs to the universal ribosomal protein uL24 family. As to quaternary structure, part of the 50S ribosomal subunit.

Functionally, one of two assembly initiator proteins, it binds directly to the 5'-end of the 23S rRNA, where it nucleates assembly of the 50S subunit. In terms of biological role, one of the proteins that surrounds the polypeptide exit tunnel on the outside of the subunit. This chain is Large ribosomal subunit protein uL24, found in Delftia acidovorans (strain DSM 14801 / SPH-1).